The following is a 232-amino-acid chain: Fibrillarin-like rRNA/tRNA 2'-O-methyltransferase (232 aa).

S-adenosyl-L-methionine contacts are provided by residues 87–88, 105–106, 130–131, and 150–153; these read TT, EF, DA, and DVAQ.

The protein belongs to the methyltransferase superfamily. Fibrillarin family. In terms of assembly, interacts with nop5. Component of box C/D small ribonucleoprotein (sRNP) particles that contain rpl7ae, FlpA and nop5, plus a guide RNA.

In terms of biological role, involved in pre-rRNA and tRNA processing. Utilizes the methyl donor S-adenosyl-L-methionine to catalyze the site-specific 2'-hydroxyl methylation of ribose moieties in rRNA and tRNA. Site specificity is provided by a guide RNA that base pairs with the substrate. Methylation occurs at a characteristic distance from the sequence involved in base pairing with the guide RNA. This is Fibrillarin-like rRNA/tRNA 2'-O-methyltransferase from Methanococcus maripaludis (strain C7 / ATCC BAA-1331).